The sequence spans 236 residues: MSIPILNYSLSTQNQRVNGFEGLPGDELPKIYTTDNLPTSIEMDEIIWAAYRQIFSEHQMLSSCMDRFLESQLRFNQIKVKDFIKGLVLSSAFRNLNYDCNNNYRFVEMCIQRVLGRDIYNEREKLAFAIIIASQGIETFVDFLLNSDEYIENFGDNTVPYQRRRIIAQRSKGEIPFNLKTPRLDYNFLYKKNMPQLLWSGPVRQFRPQEQKPKAGDPALFLNMVLDVSPSYLISS.

In terms of domain architecture, PBS-linker spans 11–193 (STQNQRVNGF…LDYNFLYKKN (183 aa)).

Belongs to the phycobilisome linker protein family. In terms of assembly, the phycobilisome is a hemidiscoidal structure that is composed of two distinct substructures: a core complex and a number of rods radiating from the core.

The protein resides in the plastid. It localises to the chloroplast. It is found in the chloroplast thylakoid membrane. Rod-core linker protein required for attachment of phycocyanin to allophycocyanin in cores of phycobilisomes. Its function is as follows. Linker polypeptides determine the state of aggregation and the location of the disk-shaped phycobiliprotein units within the phycobilisome and modulate their spectroscopic properties in order to mediate a directed and optimal energy transfer. The chain is Phycobilisome rod-core linker polypeptide cpcG (cpcG) from Aglaothamnion neglectum (Red alga).